A 207-amino-acid polypeptide reads, in one-letter code: Ribosome maturation factor RimM (207 aa).

The PRC barrel domain maps to 114–207 (DDEYYWVDLI…RIDSDWPLDY (94 aa)).

It belongs to the RimM family. As to quaternary structure, binds ribosomal protein uS19.

The protein localises to the cytoplasm. In terms of biological role, an accessory protein needed during the final step in the assembly of 30S ribosomal subunit, possibly for assembly of the head region. Essential for efficient processing of 16S rRNA. May be needed both before and after RbfA during the maturation of 16S rRNA. It has affinity for free ribosomal 30S subunits but not for 70S ribosomes. The chain is Ribosome maturation factor RimM from Bordetella pertussis (strain Tohama I / ATCC BAA-589 / NCTC 13251).